The sequence spans 704 residues: Elongation factor G (704 aa).

One can recognise a tr-type G domain in the interval 8–290 (ARYRNIGISA…AVIDYLPSPV (283 aa)). GTP contacts are provided by residues 17–24 (AHIDAGKT), 88–92 (DTPGH), and 142–145 (NKMD). 2 positions are modified to N6-acetyllysine: lysine 504 and lysine 643.

It belongs to the TRAFAC class translation factor GTPase superfamily. Classic translation factor GTPase family. EF-G/EF-2 subfamily.

It localises to the cytoplasm. Functionally, catalyzes the GTP-dependent ribosomal translocation step during translation elongation. During this step, the ribosome changes from the pre-translocational (PRE) to the post-translocational (POST) state as the newly formed A-site-bound peptidyl-tRNA and P-site-bound deacylated tRNA move to the P and E sites, respectively. Catalyzes the coordinated movement of the two tRNA molecules, the mRNA and conformational changes in the ribosome. This Shigella flexneri protein is Elongation factor G.